A 366-amino-acid chain; its full sequence is Peptide chain release factor 2 (366 aa).

Gln-251 is modified (N5-methylglutamine).

The protein belongs to the prokaryotic/mitochondrial release factor family. In terms of processing, methylated by PrmC. Methylation increases the termination efficiency of RF2.

Its subcellular location is the cytoplasm. Peptide chain release factor 2 directs the termination of translation in response to the peptide chain termination codons UGA and UAA. The polypeptide is Peptide chain release factor 2 (prfB) (Bacillus subtilis (strain 168)).